The primary structure comprises 818 residues: G-type lectin S-receptor-like serine/threonine-protein kinase At1g67520 (818 aa).

Positions 1-22 (MCSNGIFVSLLTLSLLLGKSCS) are cleaved as a signal peptide. Topologically, residues 23-387 (ETDTLHQGQF…NENKKVAAWH (365 aa)) are extracellular. The Bulb-type lectin domain maps to 24–149 (TDTLHQGQFL…DADGSMKRVL (126 aa)). N-linked (GlcNAc...) asparagine glycans are attached at residues Asn-123, Asn-199, and Asn-337. A PAN domain is found at 290–379 (CLAAGYVVRD…PRTIYIRGNE (90 aa)). 2 cysteine pairs are disulfide-bonded: Cys-330/Cys-353 and Cys-334/Cys-340. A helical transmembrane segment spans residues 388–408 (IVVATLFLMTPIIWFIIYLVL). At 409-818 (RKFNVKGRNC…SITITVLEAR (410 aa)) the chain is on the cytoplasmic side. In terms of domain architecture, Protein kinase spans 496–785 (FSDENKLGEG…ALSLPKEPAF (290 aa)). ATP contacts are provided by residues 502-510 (LGEGGFGPV) and Lys-524. Ser-530 carries the post-translational modification Phosphoserine. The caM-binding stretch occupies residues 585 to 602 (LRKNVLDWTLRFRIMEGI). Asp-621 functions as the Proton acceptor in the catalytic mechanism. Phosphoserine is present on residues Ser-625 and Ser-638. The residue at position 655 (Thr-655) is a Phosphothreonine. 2 positions are modified to phosphoserine: Ser-699 and Ser-807. Residue Thr-813 is modified to Phosphothreonine.

The protein belongs to the protein kinase superfamily. Ser/Thr protein kinase family.

It is found in the cell membrane. It catalyses the reaction L-seryl-[protein] + ATP = O-phospho-L-seryl-[protein] + ADP + H(+). It carries out the reaction L-threonyl-[protein] + ATP = O-phospho-L-threonyl-[protein] + ADP + H(+). This is G-type lectin S-receptor-like serine/threonine-protein kinase At1g67520 from Arabidopsis thaliana (Mouse-ear cress).